Consider the following 209-residue polypeptide: Large ribosomal subunit protein uL3 (209 aa).

The tract at residues 121 to 154 (GGIKRHNFHRGPMAHGSKYHRRPGSSAAKGPART) is disordered.

It belongs to the universal ribosomal protein uL3 family. Part of the 50S ribosomal subunit. Forms a cluster with proteins L14 and L19.

One of the primary rRNA binding proteins, it binds directly near the 3'-end of the 23S rRNA, where it nucleates assembly of the 50S subunit. The chain is Large ribosomal subunit protein uL3 from Desulforamulus reducens (strain ATCC BAA-1160 / DSM 100696 / MI-1) (Desulfotomaculum reducens).